Here is a 236-residue protein sequence, read N- to C-terminus: Phosphoribosylaminoimidazole-succinocarboxamide synthase (236 aa).

Belongs to the SAICAR synthetase family.

The catalysed reaction is 5-amino-1-(5-phospho-D-ribosyl)imidazole-4-carboxylate + L-aspartate + ATP = (2S)-2-[5-amino-1-(5-phospho-beta-D-ribosyl)imidazole-4-carboxamido]succinate + ADP + phosphate + 2 H(+). The protein operates within purine metabolism; IMP biosynthesis via de novo pathway; 5-amino-1-(5-phospho-D-ribosyl)imidazole-4-carboxamide from 5-amino-1-(5-phospho-D-ribosyl)imidazole-4-carboxylate: step 1/2. The chain is Phosphoribosylaminoimidazole-succinocarboxamide synthase from Rickettsia bellii (strain OSU 85-389).